We begin with the raw amino-acid sequence, 379 residues long: Cobalt-precorrin-5B C(1)-methyltransferase (379 aa).

The protein belongs to the CbiD family.

It catalyses the reaction Co-precorrin-5B + S-adenosyl-L-methionine = Co-precorrin-6A + S-adenosyl-L-homocysteine. It participates in cofactor biosynthesis; adenosylcobalamin biosynthesis; cob(II)yrinate a,c-diamide from sirohydrochlorin (anaerobic route): step 6/10. Catalyzes the methylation of C-1 in cobalt-precorrin-5B to form cobalt-precorrin-6A. In Salmonella typhi, this protein is Cobalt-precorrin-5B C(1)-methyltransferase.